We begin with the raw amino-acid sequence, 163 residues long: Type-1 angiotensin II receptor-associated protein-like (163 aa).

Residues 1–28 (MELPAVNLKAIVFTHWLLTVFACMIDWL) are Extracellular-facing. The chain crosses the membrane as a helical span at residues 29–49 (PKAYGLANITILAMGVWAIAQ). Topologically, residues 50 to 55 (RDSIDA) are cytoplasmic. The chain crosses the membrane as a helical span at residues 56–76 (IFMFLIGLLLTILTDILLFAL). At 77–95 (YFTEAEKASESGPLRDLFR) the chain is on the extracellular side. A helical transmembrane segment spans residues 96 to 116 (FSSGMGIFSLLLKPLSCFFMY). Residues 117–163 (HMYRERGGEYFVNLGFITLSRDRSSYQSIEHMDPPADQDNKLPSRTY) lie on the Cytoplasmic side of the membrane.

It is found in the membrane. Functionally, appears to be a negative regulator of angiotensin II type I receptor-mediated signaling. This Xenopus tropicalis (Western clawed frog) protein is Type-1 angiotensin II receptor-associated protein-like (agtrap).